The following is a 786-amino-acid chain: Endonuclease MutS2 (786 aa).

335 to 342 (GPNTGGKT) contributes to the ATP binding site. Residues 711–786 (LDLRGERFEN…GLGVTVVELK (76 aa)) form the Smr domain.

It belongs to the DNA mismatch repair MutS family. MutS2 subfamily. Homodimer. Binds to stalled ribosomes, contacting rRNA.

In terms of biological role, endonuclease that is involved in the suppression of homologous recombination and thus may have a key role in the control of bacterial genetic diversity. Functionally, acts as a ribosome collision sensor, splitting the ribosome into its 2 subunits. Detects stalled/collided 70S ribosomes which it binds and splits by an ATP-hydrolysis driven conformational change. Acts upstream of the ribosome quality control system (RQC), a ribosome-associated complex that mediates the extraction of incompletely synthesized nascent chains from stalled ribosomes and their subsequent degradation. Probably generates substrates for RQC. This is Endonuclease MutS2 from Bacillus cereus (strain AH820).